The sequence spans 244 residues: Ribonuclease PH (244 aa).

Phosphate contacts are provided by residues arginine 87 and 125 to 127 (GTR).

This sequence belongs to the RNase PH family. Homohexameric ring arranged as a trimer of dimers.

It carries out the reaction tRNA(n+1) + phosphate = tRNA(n) + a ribonucleoside 5'-diphosphate. Phosphorolytic 3'-5' exoribonuclease that plays an important role in tRNA 3'-end maturation. Removes nucleotide residues following the 3'-CCA terminus of tRNAs; can also add nucleotides to the ends of RNA molecules by using nucleoside diphosphates as substrates, but this may not be physiologically important. Probably plays a role in initiation of 16S rRNA degradation (leading to ribosome degradation) during starvation. This is Ribonuclease PH from Synechococcus sp. (strain JA-2-3B'a(2-13)) (Cyanobacteria bacterium Yellowstone B-Prime).